The primary structure comprises 104 residues: UPF0473 protein LJ_0477 (104 aa).

Belongs to the UPF0473 family.

This is UPF0473 protein LJ_0477 from Lactobacillus johnsonii (strain CNCM I-12250 / La1 / NCC 533).